Here is a 186-residue protein sequence, read N- to C-terminus: Ribosome-recycling factor (186 aa).

Basic and acidic residues-rich tracts occupy residues 134–169 and 176–186; these read RDAN…KKAE and AKAREAEVMED. The interval 134–186 is disordered; sequence RDANKAAETAEKDKEMTEDDRDKTKDQVQELTKKAETNVNESAKAREAEVMED.

It belongs to the RRF family.

The protein localises to the cytoplasm. In terms of biological role, responsible for the release of ribosomes from messenger RNA at the termination of protein biosynthesis. May increase the efficiency of translation by recycling ribosomes from one round of translation to another. In Rhodopirellula baltica (strain DSM 10527 / NCIMB 13988 / SH1), this protein is Ribosome-recycling factor.